A 1033-amino-acid chain; its full sequence is Lethal(2) giant larvae protein homolog SRO7 (1033 aa).

A disordered region spans residues 16 to 45 (SLKGQNSETPIENSKASFKSKNSKTSTISK). Polar residues predominate over residues 18–27 (KGQNSETPIE). The segment covering 28-45 (NSKASFKSKNSKTSTISK) has biased composition (low complexity). WD repeat units follow at residues 81 to 114 (IAAA…VVIK), 121 to 156 (IKEM…TTVF), 161 to 197 (ITSI…SFKL), 216 to 249 (SIQW…KQSF), 274 to 309 (VIQS…IMAR), 333 to 397 (KISK…MKIF), 405 to 440 (IVNI…ETML), 464 to 538 (ATTS…FEVN), 552 to 631 (DKIS…STAV), 638 to 673 (TSAI…YMEN), 685 to 736 (VTCI…DITN), 745 to 799 (KIDA…THKG), 804 to 851 (LAAT…MSEH), and 865 to 888 (SVLR…STVK). Phosphoserine is present on residues Ser-591 and Ser-602. The segment at 953–984 (SFSERSSDDNNANHPEHQYTKPTRKGRNSSYG) is disordered.

It belongs to the WD repeat L(2)GL family. In terms of assembly, interacts with MYO2 and SEC9.

It localises to the cytoplasm. Its subcellular location is the cell membrane. Its function is as follows. Acts as an allosteric regulator of polarized exocytosis by promoting the targeted fusion of vesicles with the plasma membrane. Coordinates the spatial and temporal nature of both Rab-dependent tethering and SNARE-dependent membrane fusion of exocytic vesicles with the plasma membrane. Required for targeting of the sodium pumping ATPase ENA1 to the Cell Surface, thus being involved in maintenance of ion homeostasis in cells exposed to NaCl stress. May be involved in the targeting of the myosin proteins to their intrinsic pathways. Multicopy suppressor of RHO3. May also participate in the maintenance of cell polarity and bud growth. This Saccharomyces cerevisiae (strain ATCC 204508 / S288c) (Baker's yeast) protein is Lethal(2) giant larvae protein homolog SRO7 (SRO7).